We begin with the raw amino-acid sequence, 236 residues long: SPbeta prophage-derived uncharacterized lipoprotein YokB (236 aa).

Positions 1–19 (MNIRFSMLVCVSFIFFTGG) are cleaved as a signal peptide. Cysteine 20 carries N-palmitoyl cysteine lipidation. A lipid anchor (S-diacylglycerol cysteine) is attached at cysteine 20. 2 disordered regions span residues 23 to 59 (SSAN…TPNM) and 204 to 236 (VKKV…KDNK). Positions 31–53 (SKNKNESKEESSEEGVKENDNKL) are enriched in basic and acidic residues.

The protein resides in the cell membrane. The protein is SPbeta prophage-derived uncharacterized lipoprotein YokB (yokB) of Bacillus subtilis (strain 168).